The following is a 523-amino-acid chain: Anthranilate synthase component 1 (523 aa).

L-tryptophan-binding positions include serine 45 and 296–298; that span reads PYM. A chorismate-binding site is contributed by 333-334; the sequence is GT. A Mg(2+)-binding site is contributed by glutamate 366. Residues tyrosine 454, arginine 474, 488–490, and glycine 490 each bind chorismate; that span reads GAG. Glutamate 503 is a Mg(2+) binding site.

The protein belongs to the anthranilate synthase component I family. In terms of assembly, heterotetramer consisting of two non-identical subunits: a beta subunit (TrpG) and a large alpha subunit (TrpE). Mg(2+) serves as cofactor.

The catalysed reaction is chorismate + L-glutamine = anthranilate + pyruvate + L-glutamate + H(+). Its pathway is amino-acid biosynthesis; L-tryptophan biosynthesis; L-tryptophan from chorismate: step 1/5. With respect to regulation, feedback inhibited by tryptophan. Part of a heterotetrameric complex that catalyzes the two-step biosynthesis of anthranilate, an intermediate in the biosynthesis of L-tryptophan. In the first step, the glutamine-binding beta subunit (TrpG) of anthranilate synthase (AS) provides the glutamine amidotransferase activity which generates ammonia as a substrate that, along with chorismate, is used in the second step, catalyzed by the large alpha subunit of AS (TrpE) to produce anthranilate. In the absence of TrpG, TrpE can synthesize anthranilate directly from chorismate and high concentrations of ammonia. This Vibrio cholerae serotype O1 (strain ATCC 39315 / El Tor Inaba N16961) protein is Anthranilate synthase component 1 (trpE).